A 763-amino-acid chain; its full sequence is Ethylene receptor 2 (763 aa).

The next 3 membrane-spanning stretches (helical) occupy residues 58 to 78, 86 to 106, and 115 to 135; these read FLIA…ATCS, IVLQ…ITMF, and VVLA…ATAI. Cu cation is bound by residues Cys97 and His101. The region spanning 190 to 339 is the GAF domain; that stretch reads DRHTILYTTM…VVADQVAVAL (150 aa). Residues 382–615 enclose the Histidine kinase domain; the sequence is AMYDGMRRPM…TIMLALQFQL (234 aa). The region spanning 641 to 760 is the Response regulatory domain; it reads QVILVDSDDT…ALGDELYRVL (120 aa). Asp692 bears the 4-aspartylphosphate mark.

This sequence belongs to the ethylene receptor family. The cofactor is Cu cation. Post-translationally, autophosphorylated on serine, threonine and tyrosine residues.

The protein localises to the endoplasmic reticulum membrane. It catalyses the reaction ATP + protein L-histidine = ADP + protein N-phospho-L-histidine.. Functionally, ethylene receptor related to bacterial two-component regulators. Acts as a negative regulator of ethylene signaling. May delay the transition from the vegetative stage to the floral stage by up-regulating GI (GIGANTEA) and RCN1 and cause starch accumulation in stems by down-regulating the alpha-amylase AMY3D. This Oryza sativa subsp. japonica (Rice) protein is Ethylene receptor 2.